We begin with the raw amino-acid sequence, 371 residues long: tRNA 2-selenouridine synthase (371 aa).

Residues 14 to 137 (FLDDVPLIDL…MRRFLIDTLD (124 aa)) enclose the Rhodanese domain. Catalysis depends on Cys-97, which acts as the S-selanylcysteine intermediate.

This sequence belongs to the SelU family. Monomer.

It carries out the reaction 5-methylaminomethyl-2-thiouridine(34) in tRNA + selenophosphate + (2E)-geranyl diphosphate + H2O + H(+) = 5-methylaminomethyl-2-selenouridine(34) in tRNA + (2E)-thiogeraniol + phosphate + diphosphate. It catalyses the reaction 5-methylaminomethyl-2-thiouridine(34) in tRNA + (2E)-geranyl diphosphate = 5-methylaminomethyl-S-(2E)-geranyl-thiouridine(34) in tRNA + diphosphate. The enzyme catalyses 5-methylaminomethyl-S-(2E)-geranyl-thiouridine(34) in tRNA + selenophosphate + H(+) = 5-methylaminomethyl-2-(Se-phospho)selenouridine(34) in tRNA + (2E)-thiogeraniol. The catalysed reaction is 5-methylaminomethyl-2-(Se-phospho)selenouridine(34) in tRNA + H2O = 5-methylaminomethyl-2-selenouridine(34) in tRNA + phosphate. Involved in the post-transcriptional modification of the uridine at the wobble position (U34) of tRNA(Lys), tRNA(Glu) and tRNA(Gln). Catalyzes the conversion of 2-thiouridine (S2U-RNA) to 2-selenouridine (Se2U-RNA). Acts in a two-step process involving geranylation of 2-thiouridine (S2U) to S-geranyl-2-thiouridine (geS2U) and subsequent selenation of the latter derivative to 2-selenouridine (Se2U) in the tRNA chain. In Aeromonas salmonicida (strain A449), this protein is tRNA 2-selenouridine synthase.